A 67-amino-acid chain; its full sequence is Pepsin B (67 aa).

The propeptide at 1–43 (MERIILRKGKSIREAMEEQGVLEKFLKNRPKIDPAAKYHFNND) is activation peptide.

It belongs to the peptidase A1 family.

It is found in the secreted. The enzyme catalyses Degradation of gelatin, little activity on hemoglobin. Specificity on B chain of insulin more restricted than that of pepsin A. Does not cleave 1-Phe-|-Val-2, 4-Gln-|-His-5 or 23-Gly-|-Phe-24.. The polypeptide is Pepsin B (PGB) (Sus scrofa (Pig)).